Consider the following 634-residue polypeptide: Probable potassium transport system protein Kup (634 aa).

12 consecutive transmembrane segments (helical) span residues 19-39 (AIGL…TSPL), 62-82 (VLSL…VIFV), 113-133 (FVVV…MITP), 150-170 (GLEH…FLIQ), 177-197 (IGIL…ALGV), 225-245 (IGVA…ALYA), 259-279 (WFLL…ATIL), 291-311 (LLAP…ATVI), 349-369 (IYIG…VLGF), 379-399 (YGVA…VVIW), 406-426 (LWLG…FFAA), and 431-451 (VIQG…LMST).

Belongs to the HAK/KUP transporter (TC 2.A.72) family.

It is found in the cell inner membrane. The catalysed reaction is K(+)(in) + H(+)(in) = K(+)(out) + H(+)(out). In terms of biological role, transport of potassium into the cell. Likely operates as a K(+):H(+) symporter. The sequence is that of Probable potassium transport system protein Kup from Pseudomonas aeruginosa (strain LESB58).